Reading from the N-terminus, the 283-residue chain is Bifunctional protein FolD (283 aa).

NADP(+)-binding positions include 164 to 166, serine 189, and isoleucine 230; that span reads GRS.

This sequence belongs to the tetrahydrofolate dehydrogenase/cyclohydrolase family. Homodimer.

It catalyses the reaction (6R)-5,10-methylene-5,6,7,8-tetrahydrofolate + NADP(+) = (6R)-5,10-methenyltetrahydrofolate + NADPH. The enzyme catalyses (6R)-5,10-methenyltetrahydrofolate + H2O = (6R)-10-formyltetrahydrofolate + H(+). It functions in the pathway one-carbon metabolism; tetrahydrofolate interconversion. In terms of biological role, catalyzes the oxidation of 5,10-methylenetetrahydrofolate to 5,10-methenyltetrahydrofolate and then the hydrolysis of 5,10-methenyltetrahydrofolate to 10-formyltetrahydrofolate. This is Bifunctional protein FolD from Lacticaseibacillus casei (strain BL23) (Lactobacillus casei).